Here is a 479-residue protein sequence, read N- to C-terminus: Proline--tRNA ligase (479 aa).

The protein belongs to the class-II aminoacyl-tRNA synthetase family. ProS type 3 subfamily. Homodimer.

The protein resides in the cytoplasm. The catalysed reaction is tRNA(Pro) + L-proline + ATP = L-prolyl-tRNA(Pro) + AMP + diphosphate. Catalyzes the attachment of proline to tRNA(Pro) in a two-step reaction: proline is first activated by ATP to form Pro-AMP and then transferred to the acceptor end of tRNA(Pro). This Agathobacter rectalis (strain ATCC 33656 / DSM 3377 / JCM 17463 / KCTC 5835 / VPI 0990) (Eubacterium rectale) protein is Proline--tRNA ligase.